The primary structure comprises 233 residues: Aquaglyceroporin AqpS (233 aa).

2 helical membrane passes run 11 to 31 (VAEA…GIMA) and 40 to 60 (LALV…VTIL). The short motif at 69 to 71 (NPA) is the NPA 1 element. The next 3 membrane-spanning stretches (helical) occupy residues 89-109 (AYVI…HLMF), 125-145 (AQWL…LAGI), and 152-172 (VPWL…STSF). An NPA 2 motif is present at residues 174–176 (NPA). The helical transmembrane segment at 193–213 (GDLPGFVIAELLGAVCALALM) threads the bilayer.

This sequence belongs to the MIP/aquaporin (TC 1.A.8) family. NIP (TC 1.A.8.12) subfamily.

It is found in the cell inner membrane. Functionally, involved in resistance to arsenic. Facilitates efflux of arsenite [As(III)]. Arsenate [As(V)] enters the cell through phosphate transport systems and is reduced to arsenite by the arsenate reductase ArsC. Internally generated arsenite flows out of the cell by downhill movement through AqpS. Can also transport the highly toxic methylarsenite [MAs(III)] and the relatively non-toxic methylarsenate [MAs(V)]. May be a component of an methylarsenite resistance pathway in which methylarsenite enters cells via AqpS, is oxidized by ArsH to methylarsenate, which exits the cells via AqpS. This pathway may confer a selective advantage for R.melliloti to grow in the presence of environmental methylarsenicals. This chain is Aquaglyceroporin AqpS, found in Rhizobium meliloti (strain 1021) (Ensifer meliloti).